Reading from the N-terminus, the 702-residue chain is Vacuolar protein sorting-associated protein 52 homolog (702 aa).

A coiled-coil region spans residues 505 to 535 (KEMGAKMEAVLENSEDSIEQLLTRMSAMQQT).

This sequence belongs to the VPS52 family. Component of the Golgi-associated retrograde protein (GARP) complex, also called VFT (VPS fifty-three) complex, composed of vps-51, vps-52, vps-53 and vps-54. Within the complex interacts with vps-53 and vps-54. Interacts with the small GTPases rab-6.1 and rab-6.2. Ubiquitously expressed, with particularly strong expression in neuronal cells. Specifically expressed in head and tail neurons and in the pharynx and ventral cord motor neurons.

It localises to the golgi apparatus. The protein resides in the trans-Golgi network. The protein localises to the perikaryon. Its subcellular location is the cytoplasm. It is found in the perinuclear region. Acts as a component of the GARP complex that is involved in retrograde transport from early and late endosomes to the trans-Golgi network (TGN). The GARP complex facilitates tethering as well as SNARE complex assembly at the Golgi. Plays a role in the trafficking of cargo to dense-core vesicles, probably through association with the EARP-interacting protein eipr-1. Important for neuronal function. This Caenorhabditis elegans protein is Vacuolar protein sorting-associated protein 52 homolog.